Consider the following 521-residue polypeptide: METAVAYYKDGVPYDDKGEVIITLLNGNPDGSGSGGGGGTGGSKSESSAAIHATAKWSTAQLKKTQAEQAARAKAAAEAQAKAKANRDALTQHLKDIVNEALRHNSTHPEVIDLLMPIMQRCRQKQSGCALQKQKKKPVKKRKRAEKSFQEAEQRRKEIEKEQAETERQLKLAEDEEKRLAALSEEARAVEVAQKNLAAAQSELAKVDEEINTLNTRLSSSIHARDAETNTLSGKRNELDQASAKYKELDERVKLLSPRANDPLQSRPFFEATRLRARRGDEMEEKQKQVTATETRLNQISSEINGIQEAISQANNKRSTAVSRIHDAEDNLKTAQTNLLNSQIKDAVDATVSFYQTLSEKYGEKYSKMAQELADKSKGKKISNVNEALAAFEKYKDVLNKKFSKADRDAIFNALEAVKYEDWAKHLDQFAKYLKITGHVSFGYDVVSDILKIKDTGDWKPLFLTLEKKAVDAGVSYVVVLLFSVLAGTTLGIWGIAIVTGILCAFIDKNKLNTINEVLGI.

2 disordered regions span residues 26 to 52 (NGNP…AAIH) and 127 to 163 (SGCA…EKEQ). Residues 30-42 (DGSGSGGGGGTGG) show a composition bias toward gly residues. Residues 133–145 (KQKKKPVKKRKRA) are compositionally biased toward basic residues. Over residues 146 to 163 (EKSFQEAEQRRKEIEKEQ) the composition is skewed to basic and acidic residues. The next 2 membrane-spanning stretches (helical) occupy residues 470–486 (AVDA…FSVL) and 493–509 (IWGI…FIDK).

Belongs to the channel forming colicin family.

Its subcellular location is the cell membrane. In terms of biological role, this colicin is a channel-forming colicin. This class of transmembrane toxins depolarize the cytoplasmic membrane, leading to dissipation of cellular energy. Functionally, colicins are polypeptide toxins produced by and active against E.coli and closely related bacteria. The sequence is that of Colicin-E1* (cea) from Shigella sonnei.